The following is a 79-amino-acid chain: Small ribosomal subunit protein uS17 (79 aa).

The protein belongs to the universal ribosomal protein uS17 family. Part of the 30S ribosomal subunit.

In terms of biological role, one of the primary rRNA binding proteins, it binds specifically to the 5'-end of 16S ribosomal RNA. The chain is Small ribosomal subunit protein uS17 from Rhizobium etli (strain CIAT 652).